The following is a 474-amino-acid chain: Coronin-1C (474 aa).

6 WD repeats span residues 25-70 (DDIR…GRID), 78-118 (GHTG…LTLS), 128-168 (GHSK…ALIN), 172-202 (MHSD…RVID), 215-249 (AHEG…ALWN), and 263-303 (DTSN…PYVH). The stretch at 436–474 (QNEAKLDEILKEIKSIKDTICNQDERISKLEQQMAKIAA) forms a coiled coil. Position 446 is an N6-acetyllysine (K446).

It belongs to the WD repeat coronin family. In terms of assembly, binds F-actin. Interacts with RCC2. Interacts preferentially with nucleotide-free and GDP-bound RAC1. Interacts with VIM (via head domain). Isoform 1 and isoform 2 appear as homotrimers, while isoform 3 seems to exist as monomers. Interacts with MICAL2; this interaction recruits MICAL2 to the actin filaments. Ubiquitous.

It is found in the cell membrane. It localises to the cell projection. Its subcellular location is the lamellipodium. The protein localises to the ruffle membrane. The protein resides in the cytoplasm. It is found in the cytoskeleton. It localises to the cell cortex. Its subcellular location is the endosome membrane. The protein localises to the sarcolemma. The protein resides in the myofibril. It is found in the sarcomere. It localises to the synapse. In terms of biological role, plays a role in directed cell migration by regulating the activation and subcellular location of RAC1. Increases the presence of activated RAC1 at the leading edge of migrating cells. Required for normal organization of the cytoskeleton, including the actin cytoskeleton, microtubules and the vimentin intermediate filaments. Plays a role in endoplasmic reticulum-associated endosome fission: localizes to endosome membrane tubules and promotes recruitment of TMCC1, leading to recruitment of the endoplasmic reticulum to endosome tubules for fission. Endosome membrane fission of early and late endosomes is essential to separate regions destined for lysosomal degradation from carriers to be recycled to the plasma membrane. Required for normal cell proliferation, cell migration, and normal formation of lamellipodia. Required for normal distribution of mitochondria within cells. Functionally, involved in myogenic differentiation. In Homo sapiens (Human), this protein is Coronin-1C.